A 124-amino-acid polypeptide reads, in one-letter code: Fluoride-specific ion channel FluC (124 aa).

4 consecutive transmembrane segments (helical) span residues 5 to 25 (LLVS…AVWF), 32 to 52 (FAFG…ITLG), 61 to 81 (LLFV…SAEV), and 94 to 114 (LAVI…GILV). Residues Gly-69 and Thr-72 each coordinate Na(+).

Belongs to the fluoride channel Fluc/FEX (TC 1.A.43) family.

It is found in the cell inner membrane. It carries out the reaction fluoride(in) = fluoride(out). With respect to regulation, na(+) is not transported, but it plays an essential structural role and its presence is essential for fluoride channel function. Functionally, fluoride-specific ion channel. Important for reducing fluoride concentration in the cell, thus reducing its toxicity. The sequence is that of Fluoride-specific ion channel FluC from Haemophilus ducreyi (strain 35000HP / ATCC 700724).